Consider the following 228-residue polypeptide: L-ribulose-5-phosphate 4-epimerase UlaF (228 aa).

Substrate-binding positions include 26–27, 43–44, and 72–73; these read GN, SG, and SS. Positions 74, 93, and 95 each coordinate Zn(2+). Asp118 (proton donor/acceptor) is an active-site residue. His167 contributes to the Zn(2+) binding site. Tyr225 (proton donor/acceptor) is an active-site residue.

It belongs to the aldolase class II family. AraD/FucA subfamily. Requires Zn(2+) as cofactor.

The catalysed reaction is L-ribulose 5-phosphate = D-xylulose 5-phosphate. It participates in cofactor degradation; L-ascorbate degradation; D-xylulose 5-phosphate from L-ascorbate: step 4/4. Functionally, catalyzes the isomerization of L-ribulose 5-phosphate to D-xylulose 5-phosphate. Is involved in the anaerobic L-ascorbate utilization. This chain is L-ribulose-5-phosphate 4-epimerase UlaF, found in Escherichia coli (strain SE11).